The primary structure comprises 540 residues: Membrane protein insertase YidC (540 aa).

The chain crosses the membrane as a helical span at residues 6–26; that stretch reads NILLIALALVSFLLFQQWQVA. Residues 36–47 are compositionally biased toward low complexity; the sequence is QAQSSSSLPAPS. The interval 36 to 63 is disordered; sequence QAQSSSSLPAPSFADELDPVPGQQQASA. A run of 4 helical transmembrane segments spans residues 342–362, 417–437, 455–475, and 496–516; these read AFIQ…TFIV, LGGC…YWAL, LSAQ…MFLI, and PVMF…YWLV.

It belongs to the OXA1/ALB3/YidC family. Type 1 subfamily. In terms of assembly, interacts with the Sec translocase complex via SecD. Specifically interacts with transmembrane segments of nascent integral membrane proteins during membrane integration.

The protein resides in the cell inner membrane. In terms of biological role, required for the insertion and/or proper folding and/or complex formation of integral membrane proteins into the membrane. Involved in integration of membrane proteins that insert both dependently and independently of the Sec translocase complex, as well as at least some lipoproteins. Aids folding of multispanning membrane proteins. This is Membrane protein insertase YidC from Vibrio parahaemolyticus serotype O3:K6 (strain RIMD 2210633).